A 309-amino-acid polypeptide reads, in one-letter code: Aspartate carbamoyltransferase catalytic subunit (309 aa).

Residues Arg55 and Thr56 each coordinate carbamoyl phosphate. L-aspartate is bound at residue Lys85. Carbamoyl phosphate-binding residues include Arg106, His135, and Gln138. L-aspartate contacts are provided by Arg168 and Arg230. Carbamoyl phosphate is bound by residues Leu268 and Pro269.

It belongs to the aspartate/ornithine carbamoyltransferase superfamily. ATCase family. Heterododecamer (2C3:3R2) of six catalytic PyrB chains organized as two trimers (C3), and six regulatory PyrI chains organized as three dimers (R2).

It carries out the reaction carbamoyl phosphate + L-aspartate = N-carbamoyl-L-aspartate + phosphate + H(+). It functions in the pathway pyrimidine metabolism; UMP biosynthesis via de novo pathway; (S)-dihydroorotate from bicarbonate: step 2/3. Its function is as follows. Catalyzes the condensation of carbamoyl phosphate and aspartate to form carbamoyl aspartate and inorganic phosphate, the committed step in the de novo pyrimidine nucleotide biosynthesis pathway. In Photobacterium profundum (strain SS9), this protein is Aspartate carbamoyltransferase catalytic subunit.